A 58-amino-acid polypeptide reads, in one-letter code: Small ribosomal subunit protein bS21B (58 aa).

Belongs to the bacterial ribosomal protein bS21 family.

The protein is Small ribosomal subunit protein bS21B of Trichormus variabilis (strain ATCC 29413 / PCC 7937) (Anabaena variabilis).